The primary structure comprises 330 residues: Probable aldo-keto reductase 6 (330 aa).

Y64 functions as the Proton donor in the catalytic mechanism. H132 contributes to the substrate binding site. 211–221 (SPLGRGFLGLP) contributes to the NADP(+) binding site.

Belongs to the aldo/keto reductase family.

The sequence is that of Probable aldo-keto reductase 6 from Arabidopsis thaliana (Mouse-ear cress).